The sequence spans 738 residues: Flowering time control protein FCA (738 aa).

The disordered stretch occupies residues 1-118; that stretch reads MHRGGDRSTD…RGDHSDHDNR (118 aa). Gly residues-rich tracts occupy residues 52–70 and 81–98; these read RGGG…GGGR and SGGG…GEPG. A compositionally biased stretch (basic and acidic residues) spans 109–118; that stretch reads RGDHSDHDNR. RRM domains lie at 122 to 203 and 213 to 293; these read VKLF…YADG and HKLF…FADP. Disordered stretches follow at residues 292–414 and 566–594; these read DPKR…GHHL and QQSN…AIIP. Gly residues predominate over residues 301–311; the sequence is SRGGPAFGGPG. A compositionally biased stretch (polar residues) spans 342 to 358; the sequence is HPSSPRSAPHQFNNFGS. The span at 368 to 377 shows a compositional bias: low complexity; sequence TVTSTTDTAT. Composition is skewed to polar residues over residues 383–401 and 575–594; these read FSGN…SSHM and PTQG…AIIP. The WW domain maps to 609 to 642; that stretch reads VPLTCNWTEHTSPEGFKYYYNSITRESKWDKPEE. The interval 670–738 is disordered; that stretch reads MQQLQSPPQA…QSAQERAWKS (69 aa). The segment covering 683–706 has biased composition (low complexity); that stretch reads PAMQPVQQIPQAQQGQQQMQMKQQ. Polar residues predominate over residues 723–732; it reads RIQQGIQSAQ.

In terms of assembly, interacts with FY. Binds to SF1, FIK, RPRD1B, Os09g0509000/LOC_Os09g33480 and MADS8. Mostly expressed in young flowers (panicles) and stems, and also present in young seedlings leaves and roots.

It is found in the nucleus. In terms of biological role, plays a major role in the promotion of the transition of the vegetative meristem to reproductive development. Required for RNA-mediated chromatin silencing of a range of loci in the genome. Cotranscriptionally recognizes aberrant RNA and marks it for silencing. Controls alternative cleavage and polyadenylation on pre-mRNAs and antisense RNAs. Regulates flowering time, seed size and cell volume, probably via the modulation of cell size. The protein is Flowering time control protein FCA of Oryza sativa subsp. japonica (Rice).